Reading from the N-terminus, the 365-residue chain is Spermidine/putrescine import ATP-binding protein PotA (365 aa).

Residues 9–239 (IRLTNVTKSY…PINHFVANFI (231 aa)) enclose the ABC transporter domain. 41–48 (GPSGCGKT) lines the ATP pocket.

Belongs to the ABC transporter superfamily. Spermidine/putrescine importer (TC 3.A.1.11.1) family. In terms of assembly, the complex is composed of two ATP-binding proteins (PotA), two transmembrane proteins (PotB and PotC) and a solute-binding protein (PotD).

It localises to the cell membrane. The catalysed reaction is ATP + H2O + polyamine-[polyamine-binding protein]Side 1 = ADP + phosphate + polyamineSide 2 + [polyamine-binding protein]Side 1.. Functionally, part of the ABC transporter complex PotABCD involved in spermidine/putrescine import. Responsible for energy coupling to the transport system. This is Spermidine/putrescine import ATP-binding protein PotA from Lactiplantibacillus plantarum (strain ATCC BAA-793 / NCIMB 8826 / WCFS1) (Lactobacillus plantarum).